A 96-amino-acid chain; its full sequence is Co-chaperonin GroES (96 aa).

This sequence belongs to the GroES chaperonin family. In terms of assembly, heptamer of 7 subunits arranged in a ring. Interacts with the chaperonin GroEL.

The protein resides in the cytoplasm. Functionally, together with the chaperonin GroEL, plays an essential role in assisting protein folding. The GroEL-GroES system forms a nano-cage that allows encapsulation of the non-native substrate proteins and provides a physical environment optimized to promote and accelerate protein folding. GroES binds to the apical surface of the GroEL ring, thereby capping the opening of the GroEL channel. This Paraburkholderia phytofirmans (strain DSM 17436 / LMG 22146 / PsJN) (Burkholderia phytofirmans) protein is Co-chaperonin GroES.